Consider the following 397-residue polypeptide: Elongation factor Tu (397 aa).

Residues Lys-10–Gln-207 form the tr-type G domain. The segment at Gly-19–Thr-26 is G1. Gly-19–Thr-26 is a binding site for GTP. Thr-26 contributes to the Mg(2+) binding site. A G2 region spans residues Gly-60–Ala-64. Residues Asp-81–Gly-84 are G3. GTP-binding positions include Asp-81–His-85 and Asn-136–Asp-139. The G4 stretch occupies residues Asn-136 to Asp-139. Residues Ser-174 to Leu-176 form a G5 region.

Belongs to the TRAFAC class translation factor GTPase superfamily. Classic translation factor GTPase family. EF-Tu/EF-1A subfamily. As to quaternary structure, monomer.

It localises to the cytoplasm. It catalyses the reaction GTP + H2O = GDP + phosphate + H(+). In terms of biological role, GTP hydrolase that promotes the GTP-dependent binding of aminoacyl-tRNA to the A-site of ribosomes during protein biosynthesis. In Lawsonia intracellularis (strain PHE/MN1-00), this protein is Elongation factor Tu.